A 103-amino-acid polypeptide reads, in one-letter code: Large ribosomal subunit protein uL24 (103 aa).

Belongs to the universal ribosomal protein uL24 family. As to quaternary structure, part of the 50S ribosomal subunit.

One of two assembly initiator proteins, it binds directly to the 5'-end of the 23S rRNA, where it nucleates assembly of the 50S subunit. In terms of biological role, one of the proteins that surrounds the polypeptide exit tunnel on the outside of the subunit. This is Large ribosomal subunit protein uL24 from Haemophilus ducreyi (strain 35000HP / ATCC 700724).